Consider the following 296-residue polypeptide: Formamidopyrimidine-DNA glycosylase (296 aa).

The Schiff-base intermediate with DNA role is filled by Pro2. Glu3 acts as the Proton donor in catalysis. Residue Lys61 is the Proton donor; for beta-elimination activity of the active site. The DNA site is built by His95, Arg122, and Lys169. The FPG-type zinc-finger motif lies at Asn255–Pro289. Arg279 (proton donor; for delta-elimination activity) is an active-site residue.

This sequence belongs to the FPG family. As to quaternary structure, monomer. The cofactor is Zn(2+).

It catalyses the reaction Hydrolysis of DNA containing ring-opened 7-methylguanine residues, releasing 2,6-diamino-4-hydroxy-5-(N-methyl)formamidopyrimidine.. It carries out the reaction 2'-deoxyribonucleotide-(2'-deoxyribose 5'-phosphate)-2'-deoxyribonucleotide-DNA = a 3'-end 2'-deoxyribonucleotide-(2,3-dehydro-2,3-deoxyribose 5'-phosphate)-DNA + a 5'-end 5'-phospho-2'-deoxyribonucleoside-DNA + H(+). In terms of biological role, involved in base excision repair of DNA damaged by oxidation or by mutagenic agents. Acts as a DNA glycosylase that recognizes and removes damaged bases. Has a preference for oxidized purines, such as 7,8-dihydro-8-oxoguanine (8-oxoG). Has AP (apurinic/apyrimidinic) lyase activity and introduces nicks in the DNA strand. Cleaves the DNA backbone by beta-delta elimination to generate a single-strand break at the site of the removed base with both 3'- and 5'-phosphates. The polypeptide is Formamidopyrimidine-DNA glycosylase (Thermobifida fusca (strain YX)).